The chain runs to 251 residues: MQDDQKKTTDFGFKEIPTDEKVKAVAQVFHSVAAKYDIMNDLMSGGIHRLWKRHTISQSGVRAGNCVLDIAGGTGDLTVKFSRLVGSEGQVILADINDSMLKVGRDKLANQGIVGNVKFVQANAEALPFPDDTFDCITIAFGLRNVTDKSKALASMYRVLKPGGRLLVLEFSKPESELLSQVYDQYSFRLLPAMGKLIANDADSYRYLAESIRMHPDQETLKGMMDEVGFERTSYQNLTGGIVALHKGFKF.

S-adenosyl-L-methionine contacts are provided by residues Thr74, Asp95, and 123–124 (NA).

It belongs to the class I-like SAM-binding methyltransferase superfamily. MenG/UbiE family.

It catalyses the reaction a 2-demethylmenaquinol + S-adenosyl-L-methionine = a menaquinol + S-adenosyl-L-homocysteine + H(+). The catalysed reaction is a 2-methoxy-6-(all-trans-polyprenyl)benzene-1,4-diol + S-adenosyl-L-methionine = a 5-methoxy-2-methyl-3-(all-trans-polyprenyl)benzene-1,4-diol + S-adenosyl-L-homocysteine + H(+). The protein operates within quinol/quinone metabolism; menaquinone biosynthesis; menaquinol from 1,4-dihydroxy-2-naphthoate: step 2/2. It functions in the pathway cofactor biosynthesis; ubiquinone biosynthesis. Methyltransferase required for the conversion of demethylmenaquinol (DMKH2) to menaquinol (MKH2) and the conversion of 2-polyprenyl-6-methoxy-1,4-benzoquinol (DDMQH2) to 2-polyprenyl-3-methyl-6-methoxy-1,4-benzoquinol (DMQH2). The sequence is that of Ubiquinone/menaquinone biosynthesis C-methyltransferase UbiE from Marinomonas sp. (strain MWYL1).